The chain runs to 316 residues: Ribosomal RNA small subunit methyltransferase H (316 aa).

S-adenosyl-L-methionine-binding positions include 35-37 (AGH), Asp55, Phe84, Asp105, and Gln112.

This sequence belongs to the methyltransferase superfamily. RsmH family.

It is found in the cytoplasm. It carries out the reaction cytidine(1402) in 16S rRNA + S-adenosyl-L-methionine = N(4)-methylcytidine(1402) in 16S rRNA + S-adenosyl-L-homocysteine + H(+). In terms of biological role, specifically methylates the N4 position of cytidine in position 1402 (C1402) of 16S rRNA. The polypeptide is Ribosomal RNA small subunit methyltransferase H (Streptococcus pneumoniae (strain 70585)).